Consider the following 1336-residue polypeptide: Glutamate receptor ionotropic, NMDA 2D (1336 aa).

The signal sequence occupies residues 1–27 (MRGAGGPRGPRGPAKMLLLLALACASP). At 28–582 (FPEEAPGPGG…SPSAFLEPYS (555 aa)) the chain is on the extracellular side. A glycan (N-linked (GlcNAc...) asparagine) is linked at N92. Cysteines 104 and 348 form a disulfide. N352, N366, N384, and N467 each carry an N-linked (GlcNAc...) asparagine glycan. 2 disulfides stabilise this stretch: C455–C483 and C462–C484. 3 residues coordinate L-glutamate: S539, T541, and R546. A glycan (N-linked (GlcNAc...) asparagine) is linked at N569. The chain crosses the membrane as a helical span at residues 583 to 604 (PAVWVMMFVMCLTVVAVTVFIF). The Cytoplasmic segment spans residues 605–629 (EYLSPVGYNRSLATGKRPGGSTFTI). Residues 630-641 (GKSIWLLWALVF) constitute an intramembrane region (discontinuously helical). Residues 631-650 (KSIWLLWALVFNNSVPVENP) are pore-forming. Topologically, residues 642–653 (NNSVPVENPRGT) are cytoplasmic. Residues 654–674 (TSKIMVLVWAFFAVIFLASYT) traverse the membrane as a helical segment. At 675–843 (ANLAAFMIQE…EVMSSKLDID (169 aa)) the chain is on the extracellular side. 3 residues coordinate L-glutamate: S717, T718, and D759. C773 and C828 are oxidised to a cystine. A helical transmembrane segment spans residues 844–867 (NMAGVFYMLLVAMGLSLLVFAWEH). The Cytoplasmic portion of the chain corresponds to 868–1336 (LVYWRLRHCL…AHFSSLESEV (469 aa)). 3 disordered regions span residues 900–934 (EAAP…PFVP), 981–1123 (RAAP…SLGG), and 1225–1336 (RCGC…ESEV). Positions 902 to 932 (APPPAKPPPPPQPLPSPAYPAPRPAPGPAPF) are enriched in pro residues. Over residues 981 to 991 (RAAPRGAAGRP) the composition is skewed to low complexity. Residues 992-1006 (LSPPAAQPPQKPPPS) show a composition bias toward pro residues. Low complexity predominate over residues 1035–1044 (AAAATAVGPP). Residues 1074–1089 (PGAGGAGGTGGAGGGA) are compositionally biased toward gly residues. Over residues 1091 to 1104 (AAPPPCRAAPPPCP) the composition is skewed to pro residues. Positions 1225 to 1240 (RCGCPRSHPHRPRASH) are enriched in basic residues. At R1316 the chain carries Omega-N-methylarginine. S1326 carries the phosphoserine modification. The PDZ-binding signature appears at 1334–1336 (SEV).

It belongs to the glutamate-gated ion channel (TC 1.A.10.1) family. NR2D/GRIN2D subfamily. As to quaternary structure, heterotetramer. Forms heterotetrameric channels composed of two GluN1/zeta subunits (GRIN1), and two identical GluN2/epsilon subunits (GRIN2A, GRIN2B, GRIN2C or GRIN2D) or GluN3 subunits (GRIN3A or GRIN3B) (in vitro). In vivo, the subunit composition may depend on the expression levels of the different subunits. Interacts with PDZ domains of PATJ and DLG4.

The protein resides in the cell membrane. It localises to the postsynaptic cell membrane. It catalyses the reaction Ca(2+)(in) = Ca(2+)(out). It carries out the reaction Na(+)(in) = Na(+)(out). The enzyme catalyses K(+)(in) = K(+)(out). Its function is as follows. Component of N-methyl-D-aspartate (NMDA) receptors (NMDARs) that function as heterotetrameric, ligand-gated cation channels with high calcium permeability and voltage-dependent block by Mg(2+). Participates in synaptic plasticity for learning and memory formation. Channel activation requires binding of the neurotransmitter L-glutamate to the GluN2 subunit, glycine or D-serine binding to the GluN1 subunit, plus membrane depolarization to eliminate channel inhibition by Mg(2+). NMDARs mediate simultaneously the potasium efflux and the influx of calcium and sodium. Each GluN2 subunit confers differential attributes to channel properties, including activation, deactivation and desensitization kinetics, pH sensitivity, Ca2(+) permeability, and binding to allosteric modulators. The sequence is that of Glutamate receptor ionotropic, NMDA 2D from Homo sapiens (Human).